A 142-amino-acid polypeptide reads, in one-letter code: Large ribosomal subunit protein uL13 (142 aa).

This sequence belongs to the universal ribosomal protein uL13 family. As to quaternary structure, part of the 50S ribosomal subunit.

Functionally, this protein is one of the early assembly proteins of the 50S ribosomal subunit, although it is not seen to bind rRNA by itself. It is important during the early stages of 50S assembly. The chain is Large ribosomal subunit protein uL13 from Mannheimia succiniciproducens (strain KCTC 0769BP / MBEL55E).